Reading from the N-terminus, the 134-residue chain is Large ribosomal subunit protein uL16c (134 aa).

Belongs to the universal ribosomal protein uL16 family. As to quaternary structure, part of the 50S ribosomal subunit.

The protein localises to the plastid. The protein resides in the chloroplast. The sequence is that of Large ribosomal subunit protein uL16c from Pinus thunbergii (Japanese black pine).